Reading from the N-terminus, the 394-residue chain is Phosphopentomutase (394 aa).

Mn(2+) contacts are provided by Asp-14, Asp-287, His-292, Asp-328, His-329, and His-340.

It belongs to the phosphopentomutase family. Requires Mn(2+) as cofactor.

Its subcellular location is the cytoplasm. The catalysed reaction is 2-deoxy-alpha-D-ribose 1-phosphate = 2-deoxy-D-ribose 5-phosphate. It carries out the reaction alpha-D-ribose 1-phosphate = D-ribose 5-phosphate. It functions in the pathway carbohydrate degradation; 2-deoxy-D-ribose 1-phosphate degradation; D-glyceraldehyde 3-phosphate and acetaldehyde from 2-deoxy-alpha-D-ribose 1-phosphate: step 1/2. Isomerase that catalyzes the conversion of deoxy-ribose 1-phosphate (dRib-1-P) and ribose 1-phosphate (Rib-1-P) to deoxy-ribose 5-phosphate (dRib-5-P) and ribose 5-phosphate (Rib-5-P), respectively. The chain is Phosphopentomutase from Listeria welshimeri serovar 6b (strain ATCC 35897 / DSM 20650 / CCUG 15529 / CIP 8149 / NCTC 11857 / SLCC 5334 / V8).